We begin with the raw amino-acid sequence, 234 residues long: N-(5'-phosphoribosyl)anthranilate isomerase 1 (234 aa).

Belongs to the TrpF family.

It carries out the reaction N-(5-phospho-beta-D-ribosyl)anthranilate = 1-(2-carboxyphenylamino)-1-deoxy-D-ribulose 5-phosphate. Its pathway is amino-acid biosynthesis; L-tryptophan biosynthesis; L-tryptophan from chorismate: step 3/5. The chain is N-(5'-phosphoribosyl)anthranilate isomerase 1 (trpF1) from Methanosarcina mazei (strain ATCC BAA-159 / DSM 3647 / Goe1 / Go1 / JCM 11833 / OCM 88) (Methanosarcina frisia).